We begin with the raw amino-acid sequence, 500 residues long: NAD(P)H-quinone oxidoreductase chain 4, chloroplastic (500 aa).

The next 13 helical transmembrane spans lie at 4 to 24, 35 to 55, 87 to 107, 134 to 154, 167 to 187, 211 to 231, 242 to 262, 272 to 292, 305 to 325, 330 to 350, 386 to 406, 416 to 436, and 462 to 482; these read FPWL…MLFL, YTIS…CYNF, IGTI…AFPV, LLLF…LLSM, FILY…GISL, ILFY…IPLH, HYST…YGLV, AHSM…IYAA, IAYS…SITD, GAIL…FLAG, LALP…GIIT, IFII…LLSM, and LFLS…PDFV.

Belongs to the complex I subunit 4 family.

The protein localises to the plastid. The protein resides in the chloroplast thylakoid membrane. It carries out the reaction a plastoquinone + NADH + (n+1) H(+)(in) = a plastoquinol + NAD(+) + n H(+)(out). The catalysed reaction is a plastoquinone + NADPH + (n+1) H(+)(in) = a plastoquinol + NADP(+) + n H(+)(out). The sequence is that of NAD(P)H-quinone oxidoreductase chain 4, chloroplastic from Crucihimalaya wallichii (Rock-cress).